The primary structure comprises 237 residues: Ribonuclease PH (237 aa).

Phosphate is bound by residues R86 and 124–126 (GTR).

This sequence belongs to the RNase PH family. In terms of assembly, homohexameric ring arranged as a trimer of dimers.

The catalysed reaction is tRNA(n+1) + phosphate = tRNA(n) + a ribonucleoside 5'-diphosphate. Phosphorolytic 3'-5' exoribonuclease that plays an important role in tRNA 3'-end maturation. Removes nucleotide residues following the 3'-CCA terminus of tRNAs; can also add nucleotides to the ends of RNA molecules by using nucleoside diphosphates as substrates, but this may not be physiologically important. Probably plays a role in initiation of 16S rRNA degradation (leading to ribosome degradation) during starvation. The sequence is that of Ribonuclease PH from Shewanella loihica (strain ATCC BAA-1088 / PV-4).